The primary structure comprises 256 residues: Acetyl-coenzyme A carboxylase carboxyl transferase subunit beta 2 (256 aa).

Residues 1–256 (MTVKCNKCKE…LAIHAETVSA (256 aa)) enclose the CoA carboxyltransferase N-terminal domain. Residues Cys-5, Cys-8, Cys-24, and Cys-27 each coordinate Zn(2+). A C4-type zinc finger spans residues 5–27 (CNKCKEEINKEDLEKNYYICPLC).

The protein belongs to the AccD/PCCB family. Acetyl-CoA carboxylase is a heterohexamer composed of biotin carboxyl carrier protein (AccB), biotin carboxylase (AccC) and two subunits each of ACCase subunit alpha (AccA) and ACCase subunit beta (AccD). It depends on Zn(2+) as a cofactor.

It is found in the cytoplasm. The catalysed reaction is N(6)-carboxybiotinyl-L-lysyl-[protein] + acetyl-CoA = N(6)-biotinyl-L-lysyl-[protein] + malonyl-CoA. Its pathway is lipid metabolism; malonyl-CoA biosynthesis; malonyl-CoA from acetyl-CoA: step 1/1. In terms of biological role, component of the acetyl coenzyme A carboxylase (ACC) complex. Biotin carboxylase (BC) catalyzes the carboxylation of biotin on its carrier protein (BCCP) and then the CO(2) group is transferred by the transcarboxylase to acetyl-CoA to form malonyl-CoA. This chain is Acetyl-coenzyme A carboxylase carboxyl transferase subunit beta 2, found in Lachnospira eligens (strain ATCC 27750 / DSM 3376 / VPI C15-48 / C15-B4) (Eubacterium eligens).